Consider the following 293-residue polypeptide: Urease accessory protein UreD (293 aa).

The interval M1–S22 is disordered. Residues A7–S22 are compositionally biased toward low complexity.

The protein belongs to the UreD family. In terms of assembly, ureD, UreF and UreG form a complex that acts as a GTP-hydrolysis-dependent molecular chaperone, activating the urease apoprotein by helping to assemble the nickel containing metallocenter of UreC. The UreE protein probably delivers the nickel.

It localises to the cytoplasm. Required for maturation of urease via the functional incorporation of the urease nickel metallocenter. This Alkalilimnicola ehrlichii (strain ATCC BAA-1101 / DSM 17681 / MLHE-1) protein is Urease accessory protein UreD.